The sequence spans 796 residues: Probable phosphoketolase (796 aa).

The protein belongs to the XFP family. Thiamine diphosphate serves as cofactor.

The chain is Probable phosphoketolase from Streptomyces coelicolor (strain ATCC BAA-471 / A3(2) / M145).